The sequence spans 74 residues: Veswaprin-a (74 aa).

The first 24 residues, 1–24, serve as a signal peptide directing secretion; the sequence is MSSGGLLLLLGLLTLWAEVTPISG. The 45-residue stretch at 27 to 71 folds into the WAP domain; the sequence is RPKKPGLCPPRPQKPCVKECKNDWSCPGQQKCCNYGCIDECRDPI. 4 disulfide bridges follow: cysteine 34/cysteine 59, cysteine 42/cysteine 63, cysteine 46/cysteine 58, and cysteine 52/cysteine 67.

This sequence belongs to the venom waprin family. As to expression, expressed by the venom gland.

The protein localises to the secreted. Functionally, damages membranes of susceptible bacteria. Has no hemolytic activity. Not toxic to mice. Does not inhibit the proteinases elastase and cathepsin G. This chain is Veswaprin-a, found in Demansia vestigiata (Lesser black whip snake).